The primary structure comprises 34 residues: Photosystem I reaction center subunit XII (34 aa).

A helical membrane pass occupies residues 4–24; sequence VLSAPEVFIALVVAAHAAVLA.

Belongs to the PsaM family.

It is found in the cellular thylakoid membrane. The chain is Photosystem I reaction center subunit XII from Synechococcus sp. (strain CC9605).